We begin with the raw amino-acid sequence, 405 residues long: Aminodeoxyfutalosine deaminase (405 aa).

A divalent metal cation is bound by residues histidine 61 and histidine 63. Substrate contacts are provided by glutamate 141, serine 145, and histidine 179. Histidine 206 is a binding site for a divalent metal cation. Glutamate 209 functions as the Proton donor in the catalytic mechanism. A divalent metal cation is bound at residue aspartate 306.

This sequence belongs to the metallo-dependent hydrolases superfamily. The cofactor is a divalent metal cation.

The enzyme catalyses 6-amino-6-deoxyfutalosine + H2O + H(+) = futalosine + NH4(+). It functions in the pathway quinol/quinone metabolism; menaquinone biosynthesis. In terms of biological role, catalyzes the deamination of aminodeoxyfutalosine (AFL) into futalosine (FL), a step in the biosynthesis of menaquinone (MK, vitamin K2). To a lesser extent, can also deaminate 5'-methylthioadenosine. The sequence is that of Aminodeoxyfutalosine deaminase from Nitratiruptor sp. (strain SB155-2).